The primary structure comprises 306 residues: Ribonuclease Z (306 aa).

Residues histidine 63, histidine 65, aspartate 67, histidine 68, histidine 141, aspartate 208, and histidine 266 each contribute to the Zn(2+) site. The active-site Proton acceptor is the aspartate 67.

The protein belongs to the RNase Z family. Homodimer. It depends on Zn(2+) as a cofactor.

It carries out the reaction Endonucleolytic cleavage of RNA, removing extra 3' nucleotides from tRNA precursor, generating 3' termini of tRNAs. A 3'-hydroxy group is left at the tRNA terminus and a 5'-phosphoryl group is left at the trailer molecule.. Zinc phosphodiesterase, which displays some tRNA 3'-processing endonuclease activity. Probably involved in tRNA maturation, by removing a 3'-trailer from precursor tRNA. This chain is Ribonuclease Z, found in Protochlamydia amoebophila (strain UWE25).